The primary structure comprises 734 residues: Putative protocadherin beta-18 (734 aa).

Cadherin domains follow at residues 1 to 79 (MWKT…TPTF), 80 to 188 (LNNH…APEF), 189 to 293 (EKPV…PPEI), 294 to 398 (AMTS…APIF), and 399 to 508 (TQTS…SPFV). A glycan (N-linked (GlcNAc...) asparagine) is linked at Asn-115. Residues Asn-365 and Asn-383 are each glycosylated (N-linked (GlcNAc...) asparagine). An N-linked (GlcNAc...) asparagine glycan is attached at Asn-514. The Cadherin 6 domain occupies 515–621 (GSAPCTELVP…GFSQPYLPLT (107 aa)). A helical transmembrane segment spans residues 638 to 658 (VVALASVSSLFLFSVFLFVAV).

The protein localises to the cell membrane. Potential calcium-dependent cell-adhesion protein. This chain is Putative protocadherin beta-18 (PCDHB18P), found in Homo sapiens (Human).